We begin with the raw amino-acid sequence, 201 residues long: Large ribosomal subunit protein bL25 (201 aa).

Belongs to the bacterial ribosomal protein bL25 family. CTC subfamily. In terms of assembly, part of the 50S ribosomal subunit; part of the 5S rRNA/L5/L18/L25 subcomplex. Contacts the 5S rRNA. Binds to the 5S rRNA independently of L5 and L18.

In terms of biological role, this is one of the proteins that binds to the 5S RNA in the ribosome where it forms part of the central protuberance. The sequence is that of Large ribosomal subunit protein bL25 from Burkholderia vietnamiensis (strain G4 / LMG 22486) (Burkholderia cepacia (strain R1808)).